A 297-amino-acid chain; its full sequence is Acetylglutamate kinase (297 aa).

Residues G68 to G69, R90, and N195 contribute to the substrate site.

This sequence belongs to the acetylglutamate kinase family. ArgB subfamily.

Its subcellular location is the cytoplasm. It catalyses the reaction N-acetyl-L-glutamate + ATP = N-acetyl-L-glutamyl 5-phosphate + ADP. Its pathway is amino-acid biosynthesis; L-arginine biosynthesis; N(2)-acetyl-L-ornithine from L-glutamate: step 2/4. Its function is as follows. Catalyzes the ATP-dependent phosphorylation of N-acetyl-L-glutamate. This is Acetylglutamate kinase from Mesorhizobium japonicum (strain LMG 29417 / CECT 9101 / MAFF 303099) (Mesorhizobium loti (strain MAFF 303099)).